A 373-amino-acid polypeptide reads, in one-letter code: Glutamine synthetase (373 aa).

The 83-residue stretch at 24–106 folds into the GS beta-grasp domain; it reads EKVQAMYIWI…VLCEVFKYNR (83 aa). The region spanning 113–373 is the GS catalytic domain; that stretch reads LRHTCRRIMD…TGDEPFEYKN (261 aa). An ATP-binding site is contributed by Glu-134. Mn(2+) is bound by residues Glu-134, Glu-136, Glu-196, and Glu-203. 203–208 lines the ATP pocket; sequence EFQVGP. 246–247 is an L-glutamate binding site; that stretch reads NW. His-253 contacts Mn(2+). ATP contacts are provided by residues 255–257, Arg-319, and Arg-324; that span reads NFS. L-glutamate is bound at residue Arg-319. Residue 336–338 coordinates ADP; sequence YFE. Glu-338 contacts Mn(2+). Arg-340 is a binding site for L-glutamate.

It belongs to the glutamine synthetase family. Homooctamer and homotetramer. It depends on biotin as a cofactor. The cofactor is Mg(2+). Requires Mn(2+) as cofactor. Expressed in retina, brain and liver. Little or no detectable expression in breast muscle, pancreas and spleen.

Its subcellular location is the cytoplasm. It localises to the mitochondrion. The catalysed reaction is L-glutamate + NH4(+) + ATP = L-glutamine + ADP + phosphate + H(+). It carries out the reaction L-glutamate + H(+) = 4-aminobutanoate + CO2. Glutamate to glutamine ratio influences catalytic activity. At glutamate to glutamine ratios greater than 4, decarboxylase activity ceases. In the presence of manganese, synthetase activity is limited to concentrations between 10 mM and 20 mM, whereas decarboxylase activity is not affected. Both catalytic activities are inhibited by avidin. In terms of biological role, glutamine synthetase that catalyzes the ATP-dependent conversion of glutamate and ammonia to glutamine. When expressed in liver, it may be involved in detoxifying intramitochondrially generated ammonia. Also acts as glutamate decarboxylase by catalyzing the production of 4-aminobutanoate (gamma-aminobutyric acid, GABA) in a pyridoxal phosphate-independent manner. This Gallus gallus (Chicken) protein is Glutamine synthetase.